Consider the following 204-residue polypeptide: Translation initiation factor IF-3 (204 aa).

The tract at residues 169–204 (VPKAAPKRDSGRSESAQEAPTARSAEASRPEAPANA) is disordered.

The protein belongs to the IF-3 family. In terms of assembly, monomer.

The protein resides in the cytoplasm. Functionally, IF-3 binds to the 30S ribosomal subunit and shifts the equilibrium between 70S ribosomes and their 50S and 30S subunits in favor of the free subunits, thus enhancing the availability of 30S subunits on which protein synthesis initiation begins. This is Translation initiation factor IF-3 from Deinococcus geothermalis (strain DSM 11300 / CIP 105573 / AG-3a).